Consider the following 267-residue polypeptide: Putative B3 domain-containing protein LOC_Os07g12820 (267 aa).

Residues 4 to 99 constitute a DNA-binding region (TF-B3); it reads PTFSMVKIKT…RLNVIIFNKE (96 aa).

The protein localises to the nucleus. This Oryza sativa subsp. japonica (Rice) protein is Putative B3 domain-containing protein LOC_Os07g12820.